Consider the following 312-residue polypeptide: Short chain dehydrogenase pgmD (312 aa).

Val46, Ile47, Lys171, Tyr207, Lys211, and Thr242 together coordinate NADP(+). The active-site Proton donor is the Tyr207. Lys211 functions as the Lowers pKa of active site Tyr in the catalytic mechanism.

The protein belongs to the short-chain dehydrogenases/reductases (SDR) family.

Its pathway is pigment biosynthesis. It functions in the pathway secondary metabolite biosynthesis. Short chain dehydrogenase; part of the gene cluster that mediates the biosynthesis of pleosporalin A, ascomycone A, as well as a third cryptic naphthoquinone derived pigment, all responsible for the coloration of conidia. Essential for the production of pleosporalin A, but not the 2 other final products. The pathway begins with the biosynthesis of the cyclized heptaketide 3-acetonyl-1,6,8-trihydroxy-2-naphthaldehyde by the NR-PKS pgmA. The C-6 hydroxyl group is further methylated by the O-methyltransferase pgmB to yield fusarubinaldehyde which is in turn oxidized by the cytochrome P450 monooxygenase pgmC at C-9. The C-1 hydroxyl group is then methylated spontaneously. Although pgmE, pgmD and pgmH are essential for the production of pleosporalin A, it is not the case for the 2 other final products and it remains difficult to assign a specific function to each enzyme. PgmF and pgmG seem not to be involved in pigment biosynthesis although they were regulated by the cluster-specific transcription factor pgmR. The sequence is that of Short chain dehydrogenase pgmD from Aspergillus terreus.